Consider the following 247-residue polypeptide: PF03932 family protein CutC (247 aa).

It belongs to the CutC family.

The protein resides in the cytoplasm. The sequence is that of PF03932 family protein CutC from Klebsiella pneumoniae (strain 342).